The following is a 312-amino-acid chain: Pantothenate kinase (312 aa).

ATP is bound at residue 97-104 (GSVAVGKS).

Belongs to the prokaryotic pantothenate kinase family.

The protein localises to the cytoplasm. The enzyme catalyses (R)-pantothenate + ATP = (R)-4'-phosphopantothenate + ADP + H(+). It participates in cofactor biosynthesis; coenzyme A biosynthesis; CoA from (R)-pantothenate: step 1/5. This is Pantothenate kinase from Mycolicibacterium gilvum (strain PYR-GCK) (Mycobacterium gilvum (strain PYR-GCK)).